A 595-amino-acid chain; its full sequence is Acriflavine sensitivity control protein acr-2 (595 aa).

A DNA-binding region (zn(2)-C6 fungal-type) is located at residues 22 to 49 (CYNCHRKRLRCDKSLPACLKCSINGEEC). Positions 69-88 (TTRTTNKTNFNGTNTTTPRT) are enriched in low complexity. Residues 69–172 (TTRTTNKTNF…PDDNPDPSSQ (104 aa)) are disordered. Positions 89–117 (VKSSTPTQAPTPSDSPRQLDTDVTSSSAP) are enriched in polar residues. Residues 118–138 (SHTCSRSTTTSTTTTRISSPT) are compositionally biased toward low complexity.

It is found in the nucleus. In terms of biological role, probable transcriptional regulator. This chain is Acriflavine sensitivity control protein acr-2 (acr-2), found in Neurospora crassa (strain ATCC 24698 / 74-OR23-1A / CBS 708.71 / DSM 1257 / FGSC 987).